The following is a 278-amino-acid chain: ATP synthase subunit a (278 aa).

6 helical membrane-spanning segments follow: residues 43 to 63 (TWHI…LWIF), 104 to 124 (IAPL…MDMI), 148 to 168 (DVNI…FYSI), 191 to 211 (IPVN…SLAL), 222 to 242 (LIFI…TLGV), and 249 to 269 (LIFH…LTIV).

This sequence belongs to the ATPase A chain family. In terms of assembly, F-type ATPases have 2 components, CF(1) - the catalytic core - and CF(0) - the membrane proton channel. CF(1) has five subunits: alpha(3), beta(3), gamma(1), delta(1), epsilon(1). CF(0) has three main subunits: a(1), b(2) and c(9-12). The alpha and beta chains form an alternating ring which encloses part of the gamma chain. CF(1) is attached to CF(0) by a central stalk formed by the gamma and epsilon chains, while a peripheral stalk is formed by the delta and b chains.

The protein resides in the cell inner membrane. In terms of biological role, key component of the proton channel; it plays a direct role in the translocation of protons across the membrane. This Shewanella baltica (strain OS185) protein is ATP synthase subunit a.